Consider the following 517-residue polypeptide: Putative thymidine phosphorylase (517 aa).

Belongs to the thymidine/pyrimidine-nucleoside phosphorylase family. Type 2 subfamily.

It catalyses the reaction thymidine + phosphate = 2-deoxy-alpha-D-ribose 1-phosphate + thymine. The protein is Putative thymidine phosphorylase of Legionella pneumophila (strain Corby).